Here is a 237-residue protein sequence, read N- to C-terminus: Pyridoxine 5'-phosphate synthase (237 aa).

Asn7 and Arg18 together coordinate 3-amino-2-oxopropyl phosphate. The active-site Proton acceptor is His43. Positions 45 and 50 each coordinate 1-deoxy-D-xylulose 5-phosphate. The Proton acceptor role is filled by Glu70. Thr100 provides a ligand contact to 1-deoxy-D-xylulose 5-phosphate. His190 functions as the Proton donor in the catalytic mechanism. Residues Asp191 and 213 to 214 (GH) contribute to the 3-amino-2-oxopropyl phosphate site.

Belongs to the PNP synthase family. As to quaternary structure, homooctamer; tetramer of dimers.

The protein localises to the cytoplasm. It carries out the reaction 3-amino-2-oxopropyl phosphate + 1-deoxy-D-xylulose 5-phosphate = pyridoxine 5'-phosphate + phosphate + 2 H2O + H(+). Its pathway is cofactor biosynthesis; pyridoxine 5'-phosphate biosynthesis; pyridoxine 5'-phosphate from D-erythrose 4-phosphate: step 5/5. Its function is as follows. Catalyzes the complicated ring closure reaction between the two acyclic compounds 1-deoxy-D-xylulose-5-phosphate (DXP) and 3-amino-2-oxopropyl phosphate (1-amino-acetone-3-phosphate or AAP) to form pyridoxine 5'-phosphate (PNP) and inorganic phosphate. This is Pyridoxine 5'-phosphate synthase from Bacteroides fragilis (strain ATCC 25285 / DSM 2151 / CCUG 4856 / JCM 11019 / LMG 10263 / NCTC 9343 / Onslow / VPI 2553 / EN-2).